Consider the following 245-residue polypeptide: PF03932 family protein CutC (245 aa).

It belongs to the CutC family.

Its subcellular location is the cytoplasm. This is PF03932 family protein CutC from Photobacterium profundum (strain SS9).